Reading from the N-terminus, the 225-residue chain is UPF0173 metal-dependent hydrolase PAE2160 (225 aa).

This sequence belongs to the UPF0173 family.

The polypeptide is UPF0173 metal-dependent hydrolase PAE2160 (Pyrobaculum aerophilum (strain ATCC 51768 / DSM 7523 / JCM 9630 / CIP 104966 / NBRC 100827 / IM2)).